A 902-amino-acid polypeptide reads, in one-letter code: HTH-type transcriptional regulator MalT (902 aa).

Residue 39–46 coordinates ATP; that stretch reads SPAGYGKT. The region spanning 832-897 is the HTH luxR-type domain; sequence ELVRTSPLTQ…EAIVTAENLL (66 aa). The H-T-H motif DNA-binding region spans 856-875; it reads NEQIAQELDVAGTTIKTHIR.

Belongs to the MalT family. In terms of assembly, monomer in solution. Oligomerizes to an active state in the presence of the positive effectors ATP and maltotriose.

Its activity is regulated as follows. Activated by ATP and maltotriose, which are both required for DNA binding. Functionally, positively regulates the transcription of the maltose regulon whose gene products are responsible for uptake and catabolism of malto-oligosaccharides. Specifically binds to the promoter region of its target genes, recognizing a short DNA motif called the MalT box. The chain is HTH-type transcriptional regulator MalT from Vibrio parahaemolyticus serotype O3:K6 (strain RIMD 2210633).